Reading from the N-terminus, the 505-residue chain is tRNA-2-methylthio-N(6)-dimethylallyladenosine synthase (505 aa).

An MTTase N-terminal domain is found at 14-132; sequence RTYEVRTYGC…LPVLLERARV (119 aa). Positions 23, 61, 95, 169, 173, and 176 each coordinate [4Fe-4S] cluster. The Radical SAM core domain occupies 155–386; it reads RESAYAAWVS…ALQEEISWDE (232 aa). The 69-residue stretch at 388 to 456 folds into the TRAM domain; that stretch reads KKQVGRTLEL…PHHLLAEGAV (69 aa).

Belongs to the methylthiotransferase family. MiaB subfamily. Monomer. It depends on [4Fe-4S] cluster as a cofactor.

It is found in the cytoplasm. The catalysed reaction is N(6)-dimethylallyladenosine(37) in tRNA + (sulfur carrier)-SH + AH2 + 2 S-adenosyl-L-methionine = 2-methylsulfanyl-N(6)-dimethylallyladenosine(37) in tRNA + (sulfur carrier)-H + 5'-deoxyadenosine + L-methionine + A + S-adenosyl-L-homocysteine + 2 H(+). In terms of biological role, catalyzes the methylthiolation of N6-(dimethylallyl)adenosine (i(6)A), leading to the formation of 2-methylthio-N6-(dimethylallyl)adenosine (ms(2)i(6)A) at position 37 in tRNAs that read codons beginning with uridine. The polypeptide is tRNA-2-methylthio-N(6)-dimethylallyladenosine synthase (Streptomyces coelicolor (strain ATCC BAA-471 / A3(2) / M145)).